Here is a 106-residue protein sequence, read N- to C-terminus: Large ribosomal subunit protein uL24 (106 aa).

Residues 69-106 (SNLNPVDPKTGKATRVGRKVSSEGTLVRYSKKSGEEIK) are disordered.

The protein belongs to the universal ribosomal protein uL24 family. In terms of assembly, part of the 50S ribosomal subunit.

One of two assembly initiator proteins, it binds directly to the 5'-end of the 23S rRNA, where it nucleates assembly of the 50S subunit. In terms of biological role, one of the proteins that surrounds the polypeptide exit tunnel on the outside of the subunit. The polypeptide is Large ribosomal subunit protein uL24 (Bacteroides fragilis (strain ATCC 25285 / DSM 2151 / CCUG 4856 / JCM 11019 / LMG 10263 / NCTC 9343 / Onslow / VPI 2553 / EN-2)).